A 91-amino-acid polypeptide reads, in one-letter code: Small ribosomal subunit protein bS16 (91 aa).

It belongs to the bacterial ribosomal protein bS16 family.

The polypeptide is Small ribosomal subunit protein bS16 (Phytoplasma australiense).